A 102-amino-acid chain; its full sequence is Crustacean hyperglycemic hormones 3 (102 aa).

An N-terminal signal peptide occupies residues 1–22 (MIALRLIAVTLVVAMAASTTWA). Disulfide bonds link cysteine 35/cysteine 71, cysteine 51/cysteine 67, and cysteine 54/cysteine 80. Valine 100 bears the Valine amide mark.

It belongs to the arthropod CHH/MIH/GIH/VIH hormone family.

It is found in the secreted. Its function is as follows. Hormone found in the sinus gland of isopods and decapods which controls the blood sugar level. Has a secretagogue action over the amylase released from the midgut gland. May act as a stress hormone and may be involved in the control of molting and reproduction. This is Crustacean hyperglycemic hormones 3 (CHH3) from Penaeus monodon (Giant tiger prawn).